Reading from the N-terminus, the 231-residue chain is Putative N-acetylmannosamine-6-phosphate 2-epimerase (231 aa).

Belongs to the NanE family.

The catalysed reaction is an N-acyl-D-glucosamine 6-phosphate = an N-acyl-D-mannosamine 6-phosphate. The protein operates within amino-sugar metabolism; N-acetylneuraminate degradation; D-fructose 6-phosphate from N-acetylneuraminate: step 3/5. Functionally, converts N-acetylmannosamine-6-phosphate (ManNAc-6-P) to N-acetylglucosamine-6-phosphate (GlcNAc-6-P). The sequence is that of Putative N-acetylmannosamine-6-phosphate 2-epimerase from Listeria monocytogenes serotype 4b (strain F2365).